The following is a 307-amino-acid chain: Putative S-adenosyl-L-methionine-dependent methyltransferase Mflv_5023 (307 aa).

S-adenosyl-L-methionine is bound by residues Asp-133 and Asp-162–Leu-163. Positions Ser-213 to Lys-234 are disordered.

The protein belongs to the UPF0677 family.

Exhibits S-adenosyl-L-methionine-dependent methyltransferase activity. This Mycolicibacterium gilvum (strain PYR-GCK) (Mycobacterium gilvum (strain PYR-GCK)) protein is Putative S-adenosyl-L-methionine-dependent methyltransferase Mflv_5023.